A 207-amino-acid chain; its full sequence is Thymidylate kinase (207 aa).

10–17 is an ATP binding site; that stretch reads GIEGSGKS.

This sequence belongs to the thymidylate kinase family.

The enzyme catalyses dTMP + ATP = dTDP + ADP. Phosphorylation of dTMP to form dTDP in both de novo and salvage pathways of dTTP synthesis. This is Thymidylate kinase from Halothermothrix orenii (strain H 168 / OCM 544 / DSM 9562).